A 299-amino-acid polypeptide reads, in one-letter code: Small ribosomal subunit protein uS2 (299 aa).

The segment at alanine 210–serine 299 is disordered. A compositionally biased stretch (polar residues) spans tryptophan 275 to proline 285.

It belongs to the universal ribosomal protein uS2 family. As to quaternary structure, component of the small ribosomal subunit. Mature ribosomes consist of a small (40S) and a large (60S) subunit. The 40S subunit contains about 33 different proteins and 1 molecule of RNA (18S). The 60S subunit contains about 49 different proteins and 3 molecules of RNA (28S, 5.8S and 5S). Interacts with ribosomal protein S21.

Its subcellular location is the cytoplasm. Its function is as follows. Required for the assembly and/or stability of the 40S ribosomal subunit. Required for the processing of the 20S rRNA-precursor to mature 18S rRNA in a late step of the maturation of 40S ribosomal subunits. This chain is Small ribosomal subunit protein uS2, found in Ornithodoros parkeri (Soft tick).